We begin with the raw amino-acid sequence, 352 residues long: MTDQSSSNSPSLSYKDAGVDIDAGNDLVERIKSVAKRTRRPEVMAGLGGFGALFELPSGYNQPVLVSGTDGVGTKLKLAMQLNKHDTIGIDLVAMCVNDLIVGGAEPLFFLDYYATGKLSVDIAAQVVEGIGNGCELAGCSLVGGETAEMPGMYEGDDYDLAGFCVGIVEKAKIIDGSKVATGDTLIGLPSSGPHSNGYSLIRKILEVSNADLNEDVGGKPLREALMEPTRIYVKTLLALFAELDVKALSHITGGGLTENIPRVLPDNAKAVIDCASWEFPPVFSWLQQRGNVADTEMYRTFNCGVGMVICVSANDAERAISFLSDAGEAPFVIGQIEPLAAGEEQVELRRN.

This sequence belongs to the AIR synthase family.

Its subcellular location is the cytoplasm. The enzyme catalyses 2-formamido-N(1)-(5-O-phospho-beta-D-ribosyl)acetamidine + ATP = 5-amino-1-(5-phospho-beta-D-ribosyl)imidazole + ADP + phosphate + H(+). It functions in the pathway purine metabolism; IMP biosynthesis via de novo pathway; 5-amino-1-(5-phospho-D-ribosyl)imidazole from N(2)-formyl-N(1)-(5-phospho-D-ribosyl)glycinamide: step 2/2. This is Phosphoribosylformylglycinamidine cyclo-ligase from Teredinibacter turnerae (strain ATCC 39867 / T7901).